Reading from the N-terminus, the 378-residue chain is UDP-N-acetylglucosamine--N-acetylmuramyl-(pentapeptide) pyrophosphoryl-undecaprenol N-acetylglucosamine transferase (378 aa).

UDP-N-acetyl-alpha-D-glucosamine is bound by residues 14 to 16, asparagine 125, arginine 165, serine 193, and glutamine 293; that span reads TGG.

The protein belongs to the glycosyltransferase 28 family. MurG subfamily.

It localises to the cell inner membrane. It catalyses the reaction di-trans,octa-cis-undecaprenyl diphospho-N-acetyl-alpha-D-muramoyl-L-alanyl-D-glutamyl-meso-2,6-diaminopimeloyl-D-alanyl-D-alanine + UDP-N-acetyl-alpha-D-glucosamine = di-trans,octa-cis-undecaprenyl diphospho-[N-acetyl-alpha-D-glucosaminyl-(1-&gt;4)]-N-acetyl-alpha-D-muramoyl-L-alanyl-D-glutamyl-meso-2,6-diaminopimeloyl-D-alanyl-D-alanine + UDP + H(+). The protein operates within cell wall biogenesis; peptidoglycan biosynthesis. Cell wall formation. Catalyzes the transfer of a GlcNAc subunit on undecaprenyl-pyrophosphoryl-MurNAc-pentapeptide (lipid intermediate I) to form undecaprenyl-pyrophosphoryl-MurNAc-(pentapeptide)GlcNAc (lipid intermediate II). In Bartonella quintana (strain Toulouse) (Rochalimaea quintana), this protein is UDP-N-acetylglucosamine--N-acetylmuramyl-(pentapeptide) pyrophosphoryl-undecaprenol N-acetylglucosamine transferase.